Reading from the N-terminus, the 193-residue chain is Cerebellin-1 (193 aa).

The N-terminal stretch at 1–21 (MLGVLELLLLGAAWLAGPARG) is a signal peptide. Residue asparagine 23 is glycosylated (N-linked (GlcNAc...) asparagine). An essential for interaction with NRXN1 and linker of two C1q trimers into disulfide-linked hexamers region spans residues 34-38 (CLVVC). Positions 57–193 (SGSAKVAFSA…TFSGFLVFPL (137 aa)) constitute a C1q domain. The segment at 62–193 (VAFSAIRSTN…TFSGFLVFPL (132 aa)) is necessary for interaction with CBLN3, and homotrimerization. Asparagine 79 carries N-linked (GlcNAc...) asparagine glycosylation. The interval 122 to 147 (YNRQTIQVSLMLNGWPVISAFAGDQD) is essential for interaction with GRID2.

In terms of assembly, homohexamer; disulfide-linked homotrimers. The trimers associate via N-terminal cysteine residues to form disulfide-linked hexamers. May form oligomers with CBLN2, CBLN3 AND CBLN4 prior to secretion. Once secreted, does not interact with other CBLN family members. Interacts with GRID1. Interacts with NRXN1 and NRXN2 long (alpha) and short (beta) isoforms produced by alternative promoter usage. Competes with NLGN1 for NRXN1-binding. Weakly interacts with NRXN3 short isoform and not at all with NRXN3 long isoform. Interacts (via C1q domain) with GRID2; GRID2-binding is calcium-independent; CBLN1 hexamers anchor GRID2 N-terminal domain dimers to monomeric NRXN1 isoform beta; promotes synaptogenesis and mediates the D-Serine-dependent long term depression signals and AMPA receptor endocytosis. Interacts with OTOL1. In terms of processing, the proteolytic processing to yield cerebellin seems to occur either prior to the secretion by presynaptic neurons and subsequent oligomerization or in some other location after release of the mature protein. Sialoglycoprotein. In terms of tissue distribution, in the Purkinje cells postsynaptic structures. In the cerebellum, cerebellin is much less abundant than [des-Ser1]-cerebellin.

The protein localises to the secreted. Its subcellular location is the postsynaptic cell membrane. Required for synapse integrity and synaptic plasticity. During cerebellar synapse formation, essential for the matching and maintenance of pre- and post-synaptic elements at parallel fiber-Purkinje cell synapses, the establishment of the proper pattern of climbing fiber-Purkinje cell innervation, and induction of long-term depression at parallel fiber-Purkinje cell synapses. Plays a role as a synaptic organizer that acts bidirectionally on both pre- and post-synaptic components. On the one hand induces accumulation of synaptic vesicles in the pre-synaptic part by binding with NRXN1 and in other hand induces clustering of GRID2 and its associated proteins at the post-synaptic site through association of GRID2. NRXN1-CBLN1-GRID2 complex directly induces parallel fiber protrusions that encapsulate spines of Purkinje cells leading to accumulation of GRID2 and synaptic vesicles. Required for CBLN3 export from the endoplasmic reticulum and secretion. NRXN1-CBLN1-GRID2 complex mediates the D-Serine-dependent long term depression signals and AMPA receptor endocytosis. Essential for long-term maintenance but not establishment of excitatory synapses. Inhibits the formation and function of inhibitory GABAergic synapses in cerebellar Purkinje cells. In terms of biological role, the cerebellin peptide exerts neuromodulatory functions. Directly stimulates norepinephrine release via the adenylate cyclase/PKA-dependent signaling pathway; and indirectly enhances adrenocortical secretion in vivo, through a paracrine mechanism involving medullary catecholamine release. The sequence is that of Cerebellin-1 (CBLN1) from Homo sapiens (Human).